Consider the following 149-residue polypeptide: Cytochrome c-type biogenesis protein CcmE (149 aa).

The Cytoplasmic segment spans residues 1 to 7 (MTRKQKR). The helical; Signal-anchor for type II membrane protein transmembrane segment at 8–28 (LAVIAGGMGFIATAVLLVLFA) threads the bilayer. The Periplasmic segment spans residues 29–149 (FSQSVAYFYM…GVWKGEEASQ (121 aa)). His123 and Tyr127 together coordinate heme.

The protein belongs to the CcmE/CycJ family.

It localises to the cell inner membrane. Heme chaperone required for the biogenesis of c-type cytochromes. Transiently binds heme delivered by CcmC and transfers the heme to apo-cytochromes in a process facilitated by CcmF and CcmH. The protein is Cytochrome c-type biogenesis protein CcmE of Rhizobium rhizogenes (strain K84 / ATCC BAA-868) (Agrobacterium radiobacter).